The sequence spans 688 residues: Thyroid hormone-induced protein B (688 aa).

Residues 1 to 20 (MMLSHWVLLLSLGAVWLAEG) form the signal peptide. MAM domains lie at 26 to 169 (GSCT…GYCI), 170 to 330 (ECDF…SCSG), 341 to 500 (AGCD…SCKI), and 509 to 669 (GKCT…PCND). Asparagine 32 and asparagine 135 each carry an N-linked (GlcNAc...) asparagine glycan. Asparagine 358 and asparagine 668 each carry an N-linked (GlcNAc...) asparagine glycan.

The protein resides in the membrane. It is found in the secreted. The protein localises to the extracellular space. The protein is Thyroid hormone-induced protein B of Xenopus laevis (African clawed frog).